The chain runs to 256 residues: Type III pantothenate kinase (256 aa).

7–14 (DVGNTRLK) lines the ATP pocket. Substrate is bound by residues Tyr96 and 103–106 (GADR). Catalysis depends on Asp105, which acts as the Proton acceptor. Thr133 contributes to the ATP binding site. Thr183 contacts substrate.

This sequence belongs to the type III pantothenate kinase family. As to quaternary structure, homodimer. It depends on NH4(+) as a cofactor. Requires K(+) as cofactor.

The protein resides in the cytoplasm. It carries out the reaction (R)-pantothenate + ATP = (R)-4'-phosphopantothenate + ADP + H(+). It participates in cofactor biosynthesis; coenzyme A biosynthesis; CoA from (R)-pantothenate: step 1/5. Functionally, catalyzes the phosphorylation of pantothenate (Pan), the first step in CoA biosynthesis. This is Type III pantothenate kinase from Verminephrobacter eiseniae (strain EF01-2).